The following is a 349-amino-acid chain: Alcohol dehydrogenase 1 (349 aa).

Zn(2+)-binding residues include Cys46, His69, Cys100, Cys103, Cys106, Cys114, and Cys156. NAD(+) contacts are provided by residues 180 to 186, Asp204, Lys208, 270 to 272, and Arg342; these read GAGGGLG and VGL.

It belongs to the zinc-containing alcohol dehydrogenase family. Homotetramer. It depends on Zn(2+) as a cofactor.

It catalyses the reaction a primary alcohol + NAD(+) = an aldehyde + NADH + H(+). The catalysed reaction is a secondary alcohol + NAD(+) = a ketone + NADH + H(+). This Caenorhabditis elegans protein is Alcohol dehydrogenase 1.